A 166-amino-acid chain; its full sequence is Crossover junction endodeoxyribonuclease RuvC (166 aa).

Catalysis depends on residues D7, E70, and H143. The Mg(2+) site is built by D7, E70, and H143.

It belongs to the RuvC family. As to quaternary structure, homodimer which binds Holliday junction (HJ) DNA. The HJ becomes 2-fold symmetrical on binding to RuvC with unstacked arms; it has a different conformation from HJ DNA in complex with RuvA. In the full resolvosome a probable DNA-RuvA(4)-RuvB(12)-RuvC(2) complex forms which resolves the HJ. Mg(2+) is required as a cofactor.

The protein localises to the cytoplasm. The enzyme catalyses Endonucleolytic cleavage at a junction such as a reciprocal single-stranded crossover between two homologous DNA duplexes (Holliday junction).. Functionally, the RuvA-RuvB-RuvC complex processes Holliday junction (HJ) DNA during genetic recombination and DNA repair. Endonuclease that resolves HJ intermediates. Cleaves cruciform DNA by making single-stranded nicks across the HJ at symmetrical positions within the homologous arms, yielding a 5'-phosphate and a 3'-hydroxyl group; requires a central core of homology in the junction. The consensus cleavage sequence is 5'-(A/T)TT(C/G)-3'. Cleavage occurs on the 3'-side of the TT dinucleotide at the point of strand exchange. HJ branch migration catalyzed by RuvA-RuvB allows RuvC to scan DNA until it finds its consensus sequence, where it cleaves and resolves the cruciform DNA. The polypeptide is Crossover junction endodeoxyribonuclease RuvC (Thermus thermophilus (strain ATCC BAA-163 / DSM 7039 / HB27)).